Consider the following 100-residue polypeptide: MAKKSMIEREKKRAKLVEKYSAKREALLEEFRTTESPLEKLEIHRQIQQLPRNSAPNRRRNRCWVTGRPRGVYRDFGLSRNVLREWAHEGLLPGVVKSSW.

Belongs to the universal ribosomal protein uS14 family. As to quaternary structure, part of the 30S ribosomal subunit. Contacts proteins S3 and S10.

Its function is as follows. Binds 16S rRNA, required for the assembly of 30S particles and may also be responsible for determining the conformation of the 16S rRNA at the A site. This is Small ribosomal subunit protein uS14 from Trichormus variabilis (strain ATCC 29413 / PCC 7937) (Anabaena variabilis).